Consider the following 286-residue polypeptide: Putative inorganic pyrophosphatase C3A12.02 (286 aa).

Arginine 85 contributes to the diphosphate binding site. Mg(2+) is bound by residues aspartate 122, aspartate 127, and aspartate 159.

The protein belongs to the PPase family. The cofactor is Mg(2+).

It is found in the cytoplasm. It catalyses the reaction diphosphate + H2O = 2 phosphate + H(+). This is Putative inorganic pyrophosphatase C3A12.02 from Schizosaccharomyces pombe (strain 972 / ATCC 24843) (Fission yeast).